The following is a 220-amino-acid chain: Fructose-6-phosphate aldolase (220 aa).

K85 functions as the Schiff-base intermediate with substrate in the catalytic mechanism.

It belongs to the transaldolase family. Type 3A subfamily. In terms of assembly, homodecamer.

It localises to the cytoplasm. The enzyme catalyses beta-D-fructose 6-phosphate = dihydroxyacetone + D-glyceraldehyde 3-phosphate. Its function is as follows. Catalyzes the reversible formation of fructose 6-phosphate from dihydroxyacetone and D-glyceraldehyde 3-phosphate via an aldolization reaction. The sequence is that of Fructose-6-phosphate aldolase from Salmonella heidelberg (strain SL476).